Consider the following 418-residue polypeptide: Thyroid hormone receptor alpha-A (418 aa).

Residues Met-1–Ser-38 are disordered. Positions Met-1–Pro-60 are modulating. 2 NR C4-type zinc fingers span residues Cys-61–Cys-81 and Cys-99–Cys-123. Residues Cys-61 to Asp-135 constitute a DNA-binding region (nuclear receptor). The NR LBD domain maps to Glu-171–Asp-415.

The protein belongs to the nuclear hormone receptor family. NR1 subfamily. Binds to thyroid hormone receptor element (TRE) weakly as homodimers and monomers, but binds TRE with much higher affinity as heterodimers with retinoid X receptors. Can bind DNA as a heterodimer with either rxra or rxrg.

Its subcellular location is the nucleus. Its function is as follows. High affinity receptor for triiodothyronine (T3). The polypeptide is Thyroid hormone receptor alpha-A (thra-a) (Xenopus laevis (African clawed frog)).